Consider the following 336-residue polypeptide: Dihydroorotate dehydrogenase (quinone) (336 aa).

Residues 62–66 (AGLDK) and Thr-86 each bind FMN. Substrate is bound at residue Lys-66. 111–115 (NRMGF) is a substrate binding site. 2 residues coordinate FMN: Asn-139 and Asn-172. Asn-172 contacts substrate. The Nucleophile role is filled by Ser-175. Asn-177 is a substrate binding site. The FMN site is built by Lys-217 and Thr-245. Residue 246–247 (NT) participates in substrate binding. FMN is bound by residues Gly-268, Gly-297, and 318–319 (YS).

The protein belongs to the dihydroorotate dehydrogenase family. Type 2 subfamily. Monomer. Requires FMN as cofactor.

It is found in the cell membrane. The enzyme catalyses (S)-dihydroorotate + a quinone = orotate + a quinol. It participates in pyrimidine metabolism; UMP biosynthesis via de novo pathway; orotate from (S)-dihydroorotate (quinone route): step 1/1. Functionally, catalyzes the conversion of dihydroorotate to orotate with quinone as electron acceptor. The chain is Dihydroorotate dehydrogenase (quinone) from Yersinia enterocolitica serotype O:8 / biotype 1B (strain NCTC 13174 / 8081).